Reading from the N-terminus, the 212-residue chain is Deoxyribose-phosphate aldolase (212 aa).

Asp-89 serves as the catalytic Proton donor/acceptor. The Schiff-base intermediate with acetaldehyde role is filled by Lys-151. The active-site Proton donor/acceptor is the Lys-180.

This sequence belongs to the DeoC/FbaB aldolase family. DeoC type 1 subfamily.

The protein resides in the cytoplasm. It carries out the reaction 2-deoxy-D-ribose 5-phosphate = D-glyceraldehyde 3-phosphate + acetaldehyde. Its pathway is carbohydrate degradation; 2-deoxy-D-ribose 1-phosphate degradation; D-glyceraldehyde 3-phosphate and acetaldehyde from 2-deoxy-alpha-D-ribose 1-phosphate: step 2/2. Catalyzes a reversible aldol reaction between acetaldehyde and D-glyceraldehyde 3-phosphate to generate 2-deoxy-D-ribose 5-phosphate. The protein is Deoxyribose-phosphate aldolase of Clostridium botulinum (strain Langeland / NCTC 10281 / Type F).